The chain runs to 59 residues: Small ribosomal subunit protein eS30 (59 aa).

The tract at residues 1–35 (KVHGSLARAGKVRGQTPKVAKQEKKKKKTGRAKRR) is disordered. The span at 23–35 (EKKKKKTGRAKRR) shows a compositional bias: basic residues. Lysine 51 carries the N6-succinyllysine modification.

Belongs to the eukaryotic ribosomal protein eS30 family.

This Mus spicilegus (Steppe mouse) protein is Small ribosomal subunit protein eS30 (Fau).